The chain runs to 147 residues: Protein disulfide isomerase-like 5-1 (147 aa).

Positions 1-29 (MDLAPGRRARLLVALALVVLVALAARSGA) are cleaved as a signal peptide. Residues 30–137 (EVITLTEETF…LKNFVSDEAE (108 aa)) enclose the Thioredoxin domain. Catalysis depends on nucleophile residues C59 and C62. C59 and C62 form a disulfide bridge.

The protein belongs to the protein disulfide isomerase family.

Functionally, acts as a protein-folding catalyst that interacts with nascent polypeptides to catalyze the formation, isomerization, and reduction or oxidation of disulfide bonds. May play a role in storage protein biogenesis. This Oryza sativa subsp. japonica (Rice) protein is Protein disulfide isomerase-like 5-1 (PDIL5-1).